The chain runs to 383 residues: S-adenosylmethionine synthase (383 aa).

His-15 provides a ligand contact to ATP. Asp-17 is a Mg(2+) binding site. Glu-43 contributes to the K(+) binding site. Glu-56 and Gln-99 together coordinate L-methionine. The interval 99 to 109 (QSPDINQGVDR) is flexible loop. Residues 164 to 166 (DAK), 230 to 231 (RF), Asp-239, 245 to 246 (RK), Ala-262, and Lys-266 each bind ATP. Asp-239 provides a ligand contact to L-methionine. Position 270 (Lys-270) interacts with L-methionine.

It belongs to the AdoMet synthase family. As to quaternary structure, homotetramer; dimer of dimers. Mg(2+) serves as cofactor. The cofactor is K(+).

The protein resides in the cytoplasm. The enzyme catalyses L-methionine + ATP + H2O = S-adenosyl-L-methionine + phosphate + diphosphate. It participates in amino-acid biosynthesis; S-adenosyl-L-methionine biosynthesis; S-adenosyl-L-methionine from L-methionine: step 1/1. Functionally, catalyzes the formation of S-adenosylmethionine (AdoMet) from methionine and ATP. The overall synthetic reaction is composed of two sequential steps, AdoMet formation and the subsequent tripolyphosphate hydrolysis which occurs prior to release of AdoMet from the enzyme. The sequence is that of S-adenosylmethionine synthase from Shewanella loihica (strain ATCC BAA-1088 / PV-4).